A 298-amino-acid polypeptide reads, in one-letter code: Tyrosine recombinase XerC (298 aa).

One can recognise a Core-binding (CB) domain in the interval 1-84 (MNHIQEAFLN…TLRTFYEYWM (84 aa)). Residues 105-286 (YLPQFFYEEE…SNQQLRKVYL (182 aa)) form the Tyr recombinase domain. Catalysis depends on residues Arg145, Lys169, His238, Arg241, and His264. The active-site O-(3'-phospho-DNA)-tyrosine intermediate is the Tyr273.

This sequence belongs to the 'phage' integrase family. XerC subfamily. As to quaternary structure, forms a cyclic heterotetrameric complex composed of two molecules of XerC and two molecules of XerD.

The protein localises to the cytoplasm. Its function is as follows. Site-specific tyrosine recombinase, which acts by catalyzing the cutting and rejoining of the recombining DNA molecules. The XerC-XerD complex is essential to convert dimers of the bacterial chromosome into monomers to permit their segregation at cell division. It also contributes to the segregational stability of plasmids. This Staphylococcus aureus (strain Mu3 / ATCC 700698) protein is Tyrosine recombinase XerC.